A 408-amino-acid chain; its full sequence is Dual-specificity RNA methyltransferase RlmN (408 aa).

The active-site Proton acceptor is Glu126. The Radical SAM core domain maps to Glu132 to Arg373. Cysteines 139 and 384 form a disulfide. The [4Fe-4S] cluster site is built by Cys146, Cys150, and Cys153. Residues Gly210–Glu211, Ser242, Ser264–His266, and Asn341 contribute to the S-adenosyl-L-methionine site. The S-methylcysteine intermediate role is filled by Cys384.

Belongs to the radical SAM superfamily. RlmN family. Requires [4Fe-4S] cluster as cofactor.

The protein localises to the cytoplasm. It catalyses the reaction adenosine(2503) in 23S rRNA + 2 reduced [2Fe-2S]-[ferredoxin] + 2 S-adenosyl-L-methionine = 2-methyladenosine(2503) in 23S rRNA + 5'-deoxyadenosine + L-methionine + 2 oxidized [2Fe-2S]-[ferredoxin] + S-adenosyl-L-homocysteine. It carries out the reaction adenosine(37) in tRNA + 2 reduced [2Fe-2S]-[ferredoxin] + 2 S-adenosyl-L-methionine = 2-methyladenosine(37) in tRNA + 5'-deoxyadenosine + L-methionine + 2 oxidized [2Fe-2S]-[ferredoxin] + S-adenosyl-L-homocysteine. Specifically methylates position 2 of adenine 2503 in 23S rRNA and position 2 of adenine 37 in tRNAs. m2A2503 modification seems to play a crucial role in the proofreading step occurring at the peptidyl transferase center and thus would serve to optimize ribosomal fidelity. This Bartonella tribocorum (strain CIP 105476 / IBS 506) protein is Dual-specificity RNA methyltransferase RlmN.